Here is a 430-residue protein sequence, read N- to C-terminus: uncharacterized protein (430 aa).

The next 12 membrane-spanning stretches (helical) occupy residues 36 to 56 (LFVVSISQIFGGAGLAAGVTV), 69 to 89 (AFAGLPSALFTLGSAGSALIV), 100 to 122 (TGLSAGFMIGGLGAIGVIMAAII), 126 to 148 (FLLFISLLIYGAGTATNLQARYA), 160 to 180 (TAVSITMVFTTFGAVAGPSLV), 197 to 217 (GPFILAAAAYMLAGVVLFIML), 253 to 273 (IIVGATVMVLTQIVMVAIMTM), 285 to 305 (LGAVGLVIGFHIGAMYLPSLV), 317 to 337 (AMAISSGTTLLLAGVIAAFAP), 340 to 360 (SMILLVIALSLLGLGWNFGLI), 384 to 404 (VLIALSGAAGGALSGMIVAGS), and 406 to 426 (YLALSLIGGILSLLLIPVVVW).

This sequence belongs to the major facilitator superfamily.

The protein localises to the cell membrane. This is an uncharacterized protein from Bacillus subtilis (strain 168).